Reading from the N-terminus, the 2327-residue chain is Voltage-dependent N-type calcium channel subunit alpha-1B (2327 aa).

The disordered stretch occupies residues 1-37 (MVRFGDELGGRYGGTGGGERARGGGAGGAGGPGQGGL). The Cytoplasmic portion of the chain corresponds to 1 to 90 (MVRFGDELGG…DNVVRKYAKR (90 aa)). Positions 10-37 (GRYGGTGGGERARGGGAGGAGGPGQGGL) are enriched in gly residues. Arginine 22 carries the omega-N-methylarginine modification. The I repeat unit spans residues 82–359 (NVVRKYAKRI…LVLGVLSGEF (278 aa)). A helical membrane pass occupies residues 91-114 (ITEWPPFEYMILATIIANCIVLAL). At 115–131 (EQHLPDGDKTPMSERLD) the chain is on the extracellular side. A helical transmembrane segment spans residues 132-152 (DTEPYFIGIFCFEAGIKIIAL). Residues 153–163 (GFVFHKGSYLR) lie on the Cytoplasmic side of the membrane. The helical transmembrane segment at 164 to 182 (NGWNVMDFVVVLTGILATA) threads the bilayer. Residues 183-187 (GTDFD) are Extracellular-facing. The chain crosses the membrane as a helical span at residues 188–211 (LRTLRAVRVLRPLKLVSGIPSLQV). Over 212-221 (VLKSIMKAMV) the chain is Cytoplasmic. The chain crosses the membrane as a helical span at residues 222 to 244 (PLLQIGLLLFFAILMFAIIGLEF). Topologically, residues 245–331 (YMGKFHKACF…NTNDAAGNTW (87 aa)) are extracellular. Residue asparagine 256 is glycosylated (N-linked (GlcNAc...) asparagine). A helical transmembrane segment spans residues 332–356 (NWLYFIPLIIIGSFFMLNLVLGVLS). Residues 357-482 (GEFAKERERV…FFIRRMVKAQ (126 aa)) are Cytoplasmic-facing. Residues 379–396 (QQIERELNGYLEWIFKAE) are binding to the beta subunit. Serine 411 carries the post-translational modification Phosphoserine. An ATP-binding site is contributed by 451 to 458 (ASLKSGKT). The stretch at 468–712 (EKMFRFFIRR…VFLAIAVDNL (245 aa)) is one II repeat. A helical transmembrane segment spans residues 483–501 (SFYWVVLCVVALNTLCVAM). Over 502–511 (VHYNQPQRLT) the chain is Extracellular. The chain crosses the membrane as a helical span at residues 512-534 (TALYFAEFVFLGLFLTEMSLKMY). The Cytoplasmic portion of the chain corresponds to 535-544 (GLGPRSYFRS). Residue serine 544 coordinates a 1,2-diacyl-sn-glycero-3-phospho-(1D-myo-inositol-4,5-bisphosphate). The helical transmembrane segment at 545 to 566 (SFNCFDFGVIVGSIFEVVWAAI) threads the bilayer. Residues 567–573 (KPGTSFG) lie on the Extracellular side of the membrane. A helical transmembrane segment spans residues 574–586 (ISVLRALRLLRIF). A 1,2-diacyl-sn-glycero-3-phospho-(1D-myo-inositol-4,5-bisphosphate)-binding residues include arginine 584 and lysine 587. Over 587–604 (KVTKYWNSLRNLVVSLLN) the chain is Cytoplasmic. A helical membrane pass occupies residues 605–630 (SMKSIISLLFLLFLFIVVFALLGMQL). The Extracellular segment spans residues 631–682 (FGGQFNFQDETPTTNFDTFPAAILTVFQILTGEDWNAVMYHGIESQGGVSKG). The helical transmembrane segment at 683–709 (MFSSFYFIVLTLFGNYTLLNVFLAIAV) threads the bilayer. The Cytoplasmic portion of the chain corresponds to 710–1140 (DNLANAQELT…FCHYIVTMRY (431 aa)). Serine 745, serine 748, and serine 783 each carry phosphoserine. Disordered regions lie at residues 802–1015 (TRHV…KEPH) and 1042–1066 (EQPE…PSTT). Composition is skewed to basic and acidic residues over residues 805–826 (VRPD…RDGL), 869–885 (EQDR…EERA), 914–924 (GSPEEATEREP), 961–972 (GPREAENNEEPT), and 988–1015 (PERE…KEPH). A compositionally biased stretch (polar residues) spans 1050–1066 (QRNVTRMGSQPSDPSTT). Serine 1058 carries the phosphoserine modification. The stretch at 1126–1412 (NLLRRFCHYI…IFVALIIITF (287 aa)) is one III repeat. Residues 1141–1159 (FEMVILVVIALSSIALAAE) traverse the membrane as a helical segment. Topologically, residues 1160-1167 (DPVRTDSF) are extracellular. The chain crosses the membrane as a helical span at residues 1168-1192 (RNNALKYMDYIFTGVFTFEMVIKMI). The Cytoplasmic segment spans residues 1193 to 1206 (DLGLLLHPGAYFRD). The helical transmembrane segment at 1207-1231 (LWNILDFIVVSGALVAFAFSSFMGG) threads the bilayer. Topologically, residues 1232–1237 (SKGKDI) are extracellular. Residues 1238–1258 (NTIKSLRVLRVLRPLKTIKRL) form a helical membrane-spanning segment. The Cytoplasmic segment spans residues 1259–1276 (PKLKAVFDCVVNSLKNVL). A helical transmembrane segment spans residues 1277–1296 (NILIVYMLFMFIFAVIAVQL). The Extracellular portion of the chain corresponds to 1297–1383 (FKGKFFYCTD…EQGPSPGFRM (87 aa)). A helical transmembrane segment spans residues 1384-1409 (ELSIFYVVYFVVFPFFFVNIFVALII). Over 1410–1464 (ITFQEQGDKVMSECSLEKNERACIDFAISAKPLTRYMPQNKQSFQYKTWTFVVSP) the chain is Cytoplasmic. The IV repeat unit spans residues 1449–1702 (NKQSFQYKTW…LFVAVIMDNF (254 aa)). The chain crosses the membrane as a helical span at residues 1465–1483 (PFEYFIMAMIALNTVVLMM). Residues 1484-1491 (KFYDAPYE) are Extracellular-facing. Residues 1492–1516 (YELMLKCLNIVFTSMFSMECILKII) traverse the membrane as a helical segment. At 1517 to 1526 (AFGVLNYFRD) the chain is on the cytoplasmic side. A helical transmembrane segment spans residues 1527–1548 (AWNVFDFVTVLGSITDILVTEI). The Extracellular portion of the chain corresponds to 1549–1554 (ANNFIN). N-linked (GlcNAc...) asparagine glycosylation occurs at asparagine 1554. Residues 1555 to 1573 (LSFLRLFRAARLIKLLRQG) traverse the membrane as a helical segment. The Cytoplasmic portion of the chain corresponds to 1574–1592 (YTIRILLWTFVQSFKALPY). A helical membrane pass occupies residues 1593–1612 (VCLLIAMLFFIYAIIGMQVF). The Extracellular segment spans residues 1613–1674 (GNIALDDDTS…ANASECGSDF (62 aa)). Residue asparagine 1666 is glycosylated (N-linked (GlcNAc...) asparagine). The helical transmembrane segment at 1675-1698 (AYFYFVSFIFLCSFLMLNLFVAVI) threads the bilayer. At 1699-2327 (MDNFEYLTRD…YHHPDQDHWC (629 aa)) the chain is on the cytoplasmic side. An EF-hand domain is found at 1715–1750 (HHLDEFIRVWAEYDPAACGRISYNDMFEMLKHMSPP). Aspartate 1728, arginine 1734, and aspartate 1739 together coordinate Ca(2+). Positions 1972–2193 (TLRGPDGEPQ…TPRPSITYKT (222 aa)) are disordered. Positions 2039-2053 (SHHHHHRCHRRRDKK) are enriched in basic residues. Serine 2056 bears the Phosphoserine mark. The span at 2088-2104 (CRRDRKQERGRSQERRQ) shows a compositional bias: basic and acidic residues. 2 stretches are compositionally biased toward polar residues: residues 2131-2141 (PSLSSHPTSPT) and 2152-2168 (GSGS…SGAS). 3 positions are modified to phosphoserine: serine 2212, serine 2221, and serine 2244. Disordered regions lie at residues 2230–2249 (EPLS…PYLG) and 2273–2292 (ATNS…TSQS). Positions 2276 to 2292 (SGRSSRTSYVSSLTSQS) are enriched in low complexity.

It belongs to the calcium channel alpha-1 subunit (TC 1.A.1.11) family. CACNA1B subfamily. Multisubunit complex consisting of alpha-1, alpha-2, beta and delta subunits in a 1:1:1:1 ratio. The channel activity is directed by the pore-forming and voltage-sensitive alpha-1 subunit. In many cases, this subunit is sufficient to generate voltage-sensitive calcium channel activity. The auxiliary subunits beta and alpha-2/delta linked by a disulfide bridge regulate the channel activity. Interacts with RIMS1. Interacts with FMR1 (via C-terminus); this interaction induces a decrease in the number of presynaptic functional CACNA1B channels at the cell surface. Phosphorylated in vitro by CaM-kinase II, PKA, PKC and CGPK. As to expression, widespread expression throughout the brain. Highest levels in pyramidal cell layers C1, C2 and C3 of the hippocampus, in the dentate gyrus, in the cortex layers 2 et 4, in the subiculum and the habenula.

The protein localises to the membrane. The enzyme catalyses Ca(2+)(in) = Ca(2+)(out). Is specifically blocked by omega-conotoxin GVIA. Is specifically blocked by omega-conotoxin MVIIA (ziconotide). Is insensitive to dihydropyridines (DHP). Its function is as follows. Voltage-sensitive calcium channels (VSCC) mediate the entry of calcium ions into excitable cells and are also involved in a variety of calcium-dependent processes, including muscle contraction, hormone or neurotransmitter release, gene expression, cell motility, cell division and cell death. This alpha-1B subunit gives rise to N-type calcium currents. N-type calcium channels belong to the 'high-voltage activated' (HVA) group. They are involved in pain signaling. Calcium channels containing alpha-1B subunit may play a role in directed migration of immature neurons. Mediates Ca(2+) release probability at hippocampal neuronal soma and synaptic terminals. This Mus musculus (Mouse) protein is Voltage-dependent N-type calcium channel subunit alpha-1B (Cacna1b).